The following is a 71-amino-acid chain: Large ribosomal subunit protein uL29 (71 aa).

This sequence belongs to the universal ribosomal protein uL29 family.

This is Large ribosomal subunit protein uL29 from Synechococcus sp. (strain RCC307).